Reading from the N-terminus, the 341-residue chain is Glycerol-3-phosphate dehydrogenase [NAD(P)+] (341 aa).

Positions 15, 16, 36, and 110 each coordinate NADPH. The sn-glycerol 3-phosphate site is built by Lys110, Gly139, and Ser141. Position 143 (Ala143) interacts with NADPH. Positions 194, 247, 257, 258, and 259 each coordinate sn-glycerol 3-phosphate. Lys194 (proton acceptor) is an active-site residue. NADPH is bound at residue Arg258. Residues Val282 and Glu284 each coordinate NADPH.

It belongs to the NAD-dependent glycerol-3-phosphate dehydrogenase family.

The protein resides in the cytoplasm. The catalysed reaction is sn-glycerol 3-phosphate + NAD(+) = dihydroxyacetone phosphate + NADH + H(+). It catalyses the reaction sn-glycerol 3-phosphate + NADP(+) = dihydroxyacetone phosphate + NADPH + H(+). The protein operates within membrane lipid metabolism; glycerophospholipid metabolism. Its function is as follows. Catalyzes the reduction of the glycolytic intermediate dihydroxyacetone phosphate (DHAP) to sn-glycerol 3-phosphate (G3P), the key precursor for phospholipid synthesis. In Stenotrophomonas maltophilia (strain R551-3), this protein is Glycerol-3-phosphate dehydrogenase [NAD(P)+].